The following is a 286-amino-acid chain: Bifunctional protein FolD (286 aa).

Residues 165–167, Ser190, and Val231 each bind NADP(+); that span reads GRS.

The protein belongs to the tetrahydrofolate dehydrogenase/cyclohydrolase family. As to quaternary structure, homodimer.

The catalysed reaction is (6R)-5,10-methylene-5,6,7,8-tetrahydrofolate + NADP(+) = (6R)-5,10-methenyltetrahydrofolate + NADPH. It carries out the reaction (6R)-5,10-methenyltetrahydrofolate + H2O = (6R)-10-formyltetrahydrofolate + H(+). It functions in the pathway one-carbon metabolism; tetrahydrofolate interconversion. Functionally, catalyzes the oxidation of 5,10-methylenetetrahydrofolate to 5,10-methenyltetrahydrofolate and then the hydrolysis of 5,10-methenyltetrahydrofolate to 10-formyltetrahydrofolate. The protein is Bifunctional protein FolD of Bacillus cereus (strain AH187).